The following is a 1014-amino-acid chain: MLARAPPRRPPRLVLLRLLLLHLLLLALRARCLSAEPGQGAQTWARFARAPAPEAAGLLHDTFPDGFLWAVGSAAYQTEGGWRQHGKGASIWDTFTHHSGAAPSDSPIVVAPSGAPSPPLSSTGDVASDSYNNVYRDTEGLRELGVTHYRFSISWARVLPNGTAGTPNREGLRYYRRLLERLRELGVQPVVTLYHWDLPQRLQDTYGGWANRALADHFRDYAELCFRHFGGQVKYWITIDNPYVVAWHGYATGRLAPGVRGSSRLGYLVAHNLLLAHAKVWHLYNTSFRPTQGGRVSIALSSHWINPRRMTDYNIRECQKSLDFVLGWFAKPIFIDGDYPESMKNNLSSLLPDFTESEKRLIRGTADFFALSFGPTLSFQLLDPNMKFRQLESPNLRQLLSWIDLEYNHPPIFIVENGWFVSGTTKRDDAKYMYYLKKFIMETLKAIRLDGVDVIGYTAWSLMDGFEWHRGYSIRRGLFYVDFLSQDKELLPKSSALFYQKLIEDNGFPPLPENQPLEGTFPCDFAWGVVDNYVQVDTTLSQFTDPNVYLWDVHHSKRLIKVDGVVAKKRKPYCVDFSAIRPQITLLREMRVTHFRFSLDWALILPLGNQTQVNHTVLHFYRCMISELVHANITPVVALWQPAAPHQGLPHALAKHGAWENPHTALAFADYANLCFKELGHWVNLWITMNEPNTRNMTYRAGHHLLRAHALAWHLYDDKFRAAQKGKISIALQADWIEPACPFSQNDKEVAERVLEFDIGWLAEPIFGSGDYPRVMRDWLNQKNNFLLPYFTEDEKKLVRGSFDFLAVSHYTTILVDWEKEDPMKYNDYLEVQEMTDITWLNSPSQVAVVPWGLRKVLNWLRFKYGDLPMYVTANGIDDDPHAEQDSLRIYYIKNYVNEALKAYVLDDINLCGYFAYSLSDRSAPKSGFYRYAANQFEPKPSMKHYRKIIDSNGFLGSGTLGRFCPEEYTVCTECGFFQTRKSLLVFISFLVFTFIISLALIFHYSKKGQRSYK.

Residues 1-34 form the signal peptide; that stretch reads MLARAPPRRPPRLVLLRLLLLHLLLLALRARCLS. Residues 35–982 lie on the Extracellular side of the membrane; it reads AEPGQGAQTW…TECGFFQTRK (948 aa). Glycosyl hydrolase-1 stretches follow at residues 59–508 and 517–955; these read LHDT…DNGF and LEGT…SNGF. N-linked (GlcNAc...) asparagine glycosylation is found at asparagine 161, asparagine 285, asparagine 346, asparagine 609, asparagine 614, and asparagine 696. A helical membrane pass occupies residues 983–1003; the sequence is SLLVFISFLVFTFIISLALIF. Residues 1004–1014 are Cytoplasmic-facing; sequence HYSKKGQRSYK.

The protein belongs to the glycosyl hydrolase 1 family. Klotho subfamily. In terms of assembly, homodimer. Interacts with FGF23 and FGFR1. N-glycosylated. As to expression, membrane-bound protein is present in distal renal tubules, inner ear, ependymal cells of brain choroid plexus, elongating spermatids and mature oocytes (at protein level). Soluble peptide is present in serum (100 pM) and cerebrospinal fluid. Expressed strongly in kidney, moderately in brain choroid plexus, and at low levels in pituitary, placenta, skeletal muscle, urinary bladder, aorta, pancreas, testis, ovary, colon, thyroid gland and adipocytes.

It is found in the cell membrane. The protein localises to the apical cell membrane. Its subcellular location is the secreted. It carries out the reaction a beta-D-glucuronoside + H2O = D-glucuronate + an alcohol. Its activity is regulated as follows. Inhibited by D-saccharic acid 1,4-lactone and taurocholic acid. May have weak glycosidase activity towards glucuronylated steroids. However, it lacks essential active site Glu residues at positions 241 and 874, suggesting it may be inactive as a glycosidase in vivo. May be involved in the regulation of calcium and phosphorus homeostasis by inhibiting the synthesis of active vitamin D. Essential factor for the specific interaction between FGF23 and FGFR1. Its function is as follows. The Klotho peptide generated by cleavage of the membrane-bound isoform may be an anti-aging circulating hormone which would extend life span by inhibiting insulin/IGF1 signaling. This is Klotho (Kl) from Mus musculus (Mouse).